The sequence spans 161 residues: Small heat shock protein ibp (161 aa).

Residues 35–150 form the sHSP domain; it reads EKPLSDTPAY…KPKKIFINIP (116 aa).

It belongs to the small heat shock protein (HSP20) family.

The chain is Small heat shock protein ibp (ibp) from Buchnera aphidicola subsp. Schizaphis graminum (strain Sg).